The chain runs to 144 residues: Maximins 3/H2 (144 aa).

An N-terminal signal peptide occupies residues 1 to 18; it reads MNFKYIVAVSFLIASAYA. 2 propeptides span residues 19–43 and 74–123; these read RSVQ…REIR and TAEE…KEKR. Ile143 carries the isoleucine amide modification.

Belongs to the bombinin family. As to expression, expressed by the skin glands.

The protein localises to the secreted. Maximin-3 shows antibacterial activity against both Gram-positive and Gram-negative bacteria. It also shows antimicrobial activity against the fungus C.albicans, but not against A.flavus nor P.uticale. It has little hemolytic activity. It possess a significant cytotoxicity against tumor cell lines. It possess a significant anti-HIV activity. It shows high spermicidal activity. Its function is as follows. Maximin-H2 shows antibacterial activity against both Gram-positive and Gram-negative bacteria. It also shows antimicrobial activity against the fungus C.albicans. Shows strong hemolytic activity. The sequence is that of Maximins 3/H2 from Bombina maxima (Giant fire-bellied toad).